Consider the following 263-residue polypeptide: Sulfur carrier protein FdhD (263 aa).

C107 (cysteine persulfide intermediate) is an active-site residue.

It belongs to the FdhD family.

The protein localises to the cytoplasm. In terms of biological role, required for formate dehydrogenase (FDH) activity. Acts as a sulfur carrier protein that transfers sulfur from IscS to the molybdenum cofactor prior to its insertion into FDH. The polypeptide is Sulfur carrier protein FdhD (Geobacillus kaustophilus (strain HTA426)).